A 63-amino-acid chain; its full sequence is Large ribosomal subunit protein bL28c (63 aa).

This sequence belongs to the bacterial ribosomal protein bL28 family.

The protein resides in the plastid. It localises to the chloroplast. This Pyropia yezoensis (Susabi-nori) protein is Large ribosomal subunit protein bL28c.